The chain runs to 432 residues: uncharacterized protein (432 aa).

The span at 1–14 (MSDTTDVPENQKSP) shows a compositional bias: polar residues. The tract at residues 1–42 (MSDTTDVPENQKSPKPSGKADKRKIEEKPENSSLKRKKFEDP) is disordered. Basic and acidic residues predominate over residues 18–30 (GKADKRKIEEKPE). The region spanning 85-148 (RKMVEVFSGE…HEHPIRDLPI (64 aa)) is the S4 RNA-binding domain. Residue Asp-199 is part of the active site.

It belongs to the pseudouridine synthase RluA family.

This is an uncharacterized protein from Caenorhabditis elegans.